A 253-amino-acid polypeptide reads, in one-letter code: Indole-3-glycerol phosphate synthase (253 aa).

Belongs to the TrpC family.

It catalyses the reaction 1-(2-carboxyphenylamino)-1-deoxy-D-ribulose 5-phosphate + H(+) = (1S,2R)-1-C-(indol-3-yl)glycerol 3-phosphate + CO2 + H2O. It participates in amino-acid biosynthesis; L-tryptophan biosynthesis; L-tryptophan from chorismate: step 4/5. In Bacillus thuringiensis subsp. konkukian (strain 97-27), this protein is Indole-3-glycerol phosphate synthase.